A 55-amino-acid polypeptide reads, in one-letter code: uncharacterized protein (55 aa).

The helical transmembrane segment at 27–47 threads the bilayer; sequence IFLIYHFSPIYCPYLFLFTVF.

It localises to the membrane. This is an uncharacterized protein from Acheta domesticus (House cricket).